The following is an 850-amino-acid chain: Polyhomeotic-like protein 2 (850 aa).

5 disordered regions span residues 1 to 79, 233 to 314, 335 to 386, 402 to 436, and 528 to 553; these read MENE…QYLQ, QQTP…RAVP, LPQP…DHAL, THVH…PPQR, and MTSG…KPPQ. Low complexity predominate over residues 15–32; that stretch reads SVTTNTSGTNSSSGCISS. The interaction with BMI1 stretch occupies residues 33 to 56; sequence SGGGGGSGGRPTAPQISVYSGIPD. Residues 343-352 are compositionally biased toward low complexity; that stretch reads PQPQFVAQQQ. Composition is skewed to polar residues over residues 368–380 and 402–425; these read LASV…LQSS and THVH…SQNG. The span at 529–543 shows a compositional bias: low complexity; sequence TSGNGNSASSIAGTA. The HD1 signature appears at 550-579; the sequence is KPPQAIVKPQILTHVIEGFVIQEGAEPFPV. Glycyl lysine isopeptide (Lys-Gly) (interchain with G-Cter in SUMO2) cross-links involve residues Lys-590 and Lys-592. Residues 597–624 form a disordered region; the sequence is FLPEKPPQQDHTTTTDSEMEEPYLQESK. Thr-611 carries the phosphothreonine modification. At Ser-613 the chain carries Phosphoserine. Lys-624 participates in a covalent cross-link: Glycyl lysine isopeptide (Lys-Gly) (interchain with G-Cter in SUMO2). The segment at 625–659 adopts an FCS-type zinc-finger fold; sequence EEGTPLKLKCELCGRVDFAYKFKRSKRFCSMACAK. Residues Cys-634, Cys-637, Cys-653, and Cys-657 each contribute to the Zn(2+) site. 2 disordered regions span residues 676–712 and 725–764; these read RSKL…SGTV and SQED…LDLP. Residue Lys-694 forms a Glycyl lysine isopeptide (Lys-Gly) (interchain with G-Cter in SUMO2) linkage. The segment covering 696–712 has biased composition (polar residues); the sequence is SLPTLTKDTKKQPSGTV. Ser-743 is modified (phosphoserine). In terms of domain architecture, SAM spans 786 to 850; the sequence is WNVEDVYEFI…YARISMLKDS (65 aa). Residue Lys-839 forms a Glycyl lysine isopeptide (Lys-Gly) (interchain with G-Cter in SUMO2) linkage.

In terms of assembly, component of a PRC1-like complex. Interacts with CBX4. Interacts with BMI1, PCGF2, PHC1 and RNF2. Interacts with CHTOP. Interacts with the N-terminal region of the SP1 transcription factor and with MAPKAPK2. Interacts with SAMD7. Interacts with SAMD11. As to expression, isoform 2 is ubiquitously expressed in embryos and adult tissues at much higher level than isoform 1.

The protein resides in the nucleus. Component of a Polycomb group (PcG) multiprotein PRC1-like complex, a complex class required to maintain the transcriptionally repressive state of many genes, including Hox genes, throughout development. PcG PRC1 complex acts via chromatin remodeling and modification of histones; it mediates monoubiquitination of histone H2A 'Lys-119', rendering chromatin heritably changed in its expressibility. The polypeptide is Polyhomeotic-like protein 2 (Phc2) (Mus musculus (Mouse)).